Consider the following 88-residue polypeptide: Small ribosomal subunit protein bS16 (88 aa).

Belongs to the bacterial ribosomal protein bS16 family.

This chain is Small ribosomal subunit protein bS16, found in Geotalea uraniireducens (strain Rf4) (Geobacter uraniireducens).